A 594-amino-acid chain; its full sequence is MKLIKNRVQILRERLNYLEYLYYVKSESKVSDEEYDILLEELRQLEFKYPYLITKSSSTQSISNVCDNSLNRIRHQKPMLSLNSIRDKSQLLLFDKRIKYKLSNHYNINQNLIVYCCELKIDGVALSILYKQGKLVHAATRGDGKIGENVTKNVNAIDSIPKNLKKNNNEILPDLLEIRGEIFISKLSFSKLNQEMLSSGKKVFSNARNAASGSLRQLDPHVTELRSLVFCCYGISYYAGLKQLPNSHWGRLKLCNRWGLSINNYIQIVSGIDPVLEYYNYVRKIRSELEYQIDGIVIKIDNCIYQDQLGCGFRAPNWAVAYKFPAELKLTKLNDVVFKVGRTGLITPIAYINPVVIGNVIIKKVNMHNVNEVKRLNLMIGDTVIVQRSGDVIPKILKIILENRVDNAKFIKIPEFCPSCGSILKVEDNKSSVLRCLAKLTCLAQRKSALKHFASRKAMNIQGMGSRVINQLVDKGLICTPVDFFSLSKEKLLCLDRYGEKSAERLLQSILIAKEITLSAFIYALGIPGVGESVSNKLAYMYRTIENLMNADLQSFLQLKFIGKIAAMNIYSFLHQSDNYNNIQGLIRSNLIFK.

Residues Asp-32–Asp-36, Ser-81–Leu-82, and Glu-118 each bind NAD(+). Lys-120 (N6-AMP-lysine intermediate) is an active-site residue. Positions 141, 181, 299, and 323 each coordinate NAD(+). 4 residues coordinate Zn(2+): Cys-417, Cys-420, Cys-436, and Cys-442.

The protein belongs to the NAD-dependent DNA ligase family. LigA subfamily. Mg(2+) serves as cofactor. Mn(2+) is required as a cofactor.

It carries out the reaction NAD(+) + (deoxyribonucleotide)n-3'-hydroxyl + 5'-phospho-(deoxyribonucleotide)m = (deoxyribonucleotide)n+m + AMP + beta-nicotinamide D-nucleotide.. Functionally, DNA ligase that catalyzes the formation of phosphodiester linkages between 5'-phosphoryl and 3'-hydroxyl groups in double-stranded DNA using NAD as a coenzyme and as the energy source for the reaction. It is essential for DNA replication and repair of damaged DNA. This chain is DNA ligase, found in Blochmanniella floridana.